The chain runs to 503 residues: Arabinose import ATP-binding protein AraG 1 (503 aa).

ABC transporter domains are found at residues 5-240 (LRFD…MVGR) and 251-497 (RALG…LPQT). 37-44 (GENGAGKS) contacts ATP.

This sequence belongs to the ABC transporter superfamily. Arabinose importer (TC 3.A.1.2.2) family. The complex is composed of two ATP-binding proteins (AraG), two transmembrane proteins (AraH) and a solute-binding protein (AraF).

The protein resides in the cell inner membrane. It catalyses the reaction L-arabinose(out) + ATP + H2O = L-arabinose(in) + ADP + phosphate + H(+). Its function is as follows. Part of the ABC transporter complex AraFGH involved in arabinose import. Responsible for energy coupling to the transport system. The chain is Arabinose import ATP-binding protein AraG 1 from Burkholderia lata (strain ATCC 17760 / DSM 23089 / LMG 22485 / NCIMB 9086 / R18194 / 383).